The sequence spans 283 residues: Short-chain dehydrogenase anuB (283 aa).

Residues Thr-57, Asp-78, Asn-106, Tyr-166, Lys-170, Val-199, and Thr-201 each coordinate NADP(+). The Proton acceptor role is filled by Tyr-166. Tyr-166 functions as the Proton donor in the catalytic mechanism. Residue Lys-170 is the Lowers pKa of active site Tyr of the active site.

The protein belongs to the short-chain dehydrogenases/reductases (SDR) family.

It participates in secondary metabolite biosynthesis. In terms of biological role, highly reducing polyketide synthase; part of the gene cluster that mediates the biosynthesis of annullatin D, an alkylated aromatic polyketide with a fused dihydrobenzofuran lactone ring system that exhibits potent agonistic activities toward the cannabinoid receptors. The annullatin backbone 2-hydroxymethyl-3-pentylphenol is assembled from one acetyl-CoA starter unit and 5 malonyl-CoA elongation units by cooperation of the highly reducing polyketide synthase anuA, the short-chain dehydrogenase anuB and the oxidoreductase anuC, before being hydroxylated at the C-5 alkyl chain by the cytochrome P450 monooxygenase anuE to form (8S)-annullatin E. The prenyltransferase anuH subsequently installs one isoprenyl group at the benzene ring to form (8S)-annullatin J. Enzymatic or nonenzymatic dihydro-benzofuran ring formation between the prenyl and the phenolic hydroxyl groups in (8S)-annullatin J results in two diastereomers (2S,9S)-annullatin H and compound 12. The intermediate (2S,9S)-annullatin H is then converted to (2S,9S)-annullatin D by the FAD-linked oxidoreductase anuG-catalyzed five-member lactone ring formation. The isomer 12 acts as a substrate for the short-chain dehydrogenase anuF and is oxidized to (2R)-annullatin F, which is subsequently acetylated by an acetyltransferase leading to (2R)-annullatin G formation. The remaining enzymes identified within the cluster, anuD, anuI and anuJ, seem not to be involved in annullatin biosynthesis. The chain is Short-chain dehydrogenase anuB from Penicillium roqueforti (strain FM164).